Reading from the N-terminus, the 89-residue chain is Small ribosomal subunit protein uS17 (89 aa).

The protein belongs to the universal ribosomal protein uS17 family. Part of the 30S ribosomal subunit.

Functionally, one of the primary rRNA binding proteins, it binds specifically to the 5'-end of 16S ribosomal RNA. This is Small ribosomal subunit protein uS17 from Stenotrophomonas maltophilia (strain K279a).